The chain runs to 57 residues: Large ribosomal subunit protein bL33 (57 aa).

It belongs to the bacterial ribosomal protein bL33 family.

This is Large ribosomal subunit protein bL33 from Shewanella denitrificans (strain OS217 / ATCC BAA-1090 / DSM 15013).